A 62-amino-acid chain; its full sequence is MARRCTLTFKGSMIGNHVSHANNKNKRRLLPNLRSIKIQLDDGTTRRIKVAASTLRTMRKGA.

The protein belongs to the bacterial ribosomal protein bL28 family.

The protein is Large ribosomal subunit protein bL28 of Helicobacter acinonychis (strain Sheeba).